A 423-amino-acid chain; its full sequence is UPF0229 protein Pfl01_5140 (423 aa).

Residues 83–108 (TAGEHIARPPGGGGGRGPGKAGNSGE) form a disordered region. Residues 92–107 (PGGGGGRGPGKAGNSG) are compositionally biased toward gly residues.

The protein belongs to the UPF0229 family.

The chain is UPF0229 protein Pfl01_5140 from Pseudomonas fluorescens (strain Pf0-1).